The primary structure comprises 374 residues: N-acetyldiaminopimelate deacetylase (374 aa).

Residue Asp69 is part of the active site. Glu128 acts as the Proton acceptor in catalysis.

The protein belongs to the peptidase M20A family. N-acetyldiaminopimelate deacetylase subfamily.

The catalysed reaction is N-acetyl-(2S,6S)-2,6-diaminopimelate + H2O = (2S,6S)-2,6-diaminopimelate + acetate. It functions in the pathway amino-acid biosynthesis; L-lysine biosynthesis via DAP pathway; LL-2,6-diaminopimelate from (S)-tetrahydrodipicolinate (acetylase route): step 3/3. Functionally, catalyzes the conversion of N-acetyl-diaminopimelate to diaminopimelate and acetate. The sequence is that of N-acetyldiaminopimelate deacetylase from Bacillus velezensis (strain DSM 23117 / BGSC 10A6 / LMG 26770 / FZB42) (Bacillus amyloliquefaciens subsp. plantarum).